The chain runs to 544 residues: MTKFIFVTGGVVSSLGKGIAAASIAAILESRGLNVTMLKLDPYINVDPGTMSPFQHGEVFVTDDGAETDLDLGHYERFIDSTMTRRNSFSTGQVYENVIAKERRGDYLGGTVQVIPHITDEIKRRIHEGAAGYDVAIVEIGGTVGDIESLPFLEAIRQMRSQLGRNNTLFAHLSYVPYIAAAGEIKTKPTQHTVKEMLSIGLQPDILICRMDRTMPADERRKIALFCNVEERAIVGSYDVDSIYECPEMLHDQGIDNIITEQLQLNVQQADLTAWKKIVHAIQNPKHTVKIAMVGKYVDLTESYKSLIEALKHAGIHTETDVQITFVDSESIEKNNGDVSMLKDMDAILVPGGFGSRGVEGKIAAVRYARENNVPYLGICLGMQIALIEYARDVAGLKGANSTEFDLKCAAPVVALIDEWQTADGSVETRDESADLGGTMRLGAQEVELKAGSLAAKIYGSGHIRERHRHRYEVNNNYVPQLEKAGLVIGGVSAGRERLVETIELPNHPWFFACQFHPEFTSNPRKGHPLFTAFVKAALNNKKA.

Residues 1 to 265 form an amidoligase domain region; sequence MTKFIFVTGG…DNIITEQLQL (265 aa). Residue Ser13 participates in CTP binding. UTP is bound at residue Ser13. ATP contacts are provided by residues 14-19 and Asp71; that span reads SLGKGI. Mg(2+)-binding residues include Asp71 and Glu139. CTP-binding positions include 146-148, 186-191, and Lys222; these read DIE and KTKPTQ. UTP-binding positions include 186 to 191 and Lys222; that span reads KTKPTQ. Positions 290 to 544 constitute a Glutamine amidotransferase type-1 domain; the sequence is KIAMVGKYVD…VKAALNNKKA (255 aa). An L-glutamine-binding site is contributed by Gly353. The Nucleophile; for glutamine hydrolysis role is filled by Cys380. L-glutamine-binding positions include 381–384, Glu404, and Arg471; that span reads LGMQ. Catalysis depends on residues His517 and Glu519.

The protein belongs to the CTP synthase family. As to quaternary structure, homotetramer.

It catalyses the reaction UTP + L-glutamine + ATP + H2O = CTP + L-glutamate + ADP + phosphate + 2 H(+). The catalysed reaction is L-glutamine + H2O = L-glutamate + NH4(+). The enzyme catalyses UTP + NH4(+) + ATP = CTP + ADP + phosphate + 2 H(+). Its pathway is pyrimidine metabolism; CTP biosynthesis via de novo pathway; CTP from UDP: step 2/2. With respect to regulation, allosterically activated by GTP, when glutamine is the substrate; GTP has no effect on the reaction when ammonia is the substrate. The allosteric effector GTP functions by stabilizing the protein conformation that binds the tetrahedral intermediate(s) formed during glutamine hydrolysis. Inhibited by the product CTP, via allosteric rather than competitive inhibition. Its function is as follows. Catalyzes the ATP-dependent amination of UTP to CTP with either L-glutamine or ammonia as the source of nitrogen. Regulates intracellular CTP levels through interactions with the four ribonucleotide triphosphates. The protein is CTP synthase of Neisseria meningitidis serogroup C (strain 053442).